Reading from the N-terminus, the 266-residue chain is Putative carbamate hydrolase RutD (266 aa).

The protein belongs to the AB hydrolase superfamily. Hydrolase RutD family.

The catalysed reaction is carbamate + 2 H(+) = NH4(+) + CO2. Functionally, involved in pyrimidine catabolism. May facilitate the hydrolysis of carbamate, a reaction that can also occur spontaneously. The sequence is that of Putative carbamate hydrolase RutD from Enterobacter cloacae subsp. cloacae (strain ATCC 13047 / DSM 30054 / NBRC 13535 / NCTC 10005 / WDCM 00083 / NCDC 279-56).